Reading from the N-terminus, the 223-residue chain is Large ribosomal subunit protein uL6c (223 aa).

The transit peptide at 1 to 41 (MASSLVSSFQPRSAFLGDRNVFKVSSTPFAQVGYSSKTIEC) directs the protein to the chloroplast.

It belongs to the universal ribosomal protein uL6 family. In terms of assembly, part of the 50S ribosomal subunit.

It localises to the plastid. The protein resides in the chloroplast. Functionally, this protein binds directly to 23S ribosomal RNA and is located at the aminoacyl-tRNA binding site of the peptidyltransferase center. In Arabidopsis thaliana (Mouse-ear cress), this protein is Large ribosomal subunit protein uL6c (RPL6).